A 373-amino-acid polypeptide reads, in one-letter code: Alpha-1,3-mannosyl-glycoprotein 4-beta-N-acetylglucosaminyltransferase-like protein MGAT4D (373 aa).

The Cytoplasmic segment spans residues 1 to 5 (MKAKN). A helical; Signal-anchor for type II membrane protein transmembrane segment spans residues 6 to 26 (VNLLFAFVAVLLFGFSCFCIS). Residues 27–373 (RMNQTNNQLI…REQHLKDNYY (347 aa)) are Lumenal-facing. 3 N-linked (GlcNAc...) asparagine glycosylation sites follow: Asn29, Asn54, and Asn144.

Belongs to the glycosyltransferase 54 family. As to quaternary structure, isoform 2 self-associates; specifically in the endoplasmic reticulum prior to its translocation to the Golgi. Isoform 1 and isoform 2 interact with MGAT1, MGAT3 and MAN2A2; isoform 2 interacts specifically with MGAT1 in the Golgi. Post-translationally, isoform 2 is N-glycosylated; consisting of high-mannose and/or hybrid glycans. In terms of tissue distribution, isoform 1 and isoform 2 are specifically expressed in testis. Isoform 2 is expressed in spermatocytes but not in spermatids. Isoform 1 is expressed in spermatids.

It localises to the endoplasmic reticulum membrane. It is found in the endoplasmic reticulum-Golgi intermediate compartment membrane. The protein localises to the golgi apparatus membrane. In terms of biological role, may play a role in male spermatogenesis. In vitro acts as inhibitor of MGAT1 activity causing cell surface proteins to carry mainly high mannose N-glycans. The function is mediated by its lumenal domain and occurs specifically in the Golgi. A catalytic glucosyltransferase activity is not detected. May be involved in regulation of Sertoli-germ cell interactions during specific stages of spermatogenesis. In Mus musculus (Mouse), this protein is Alpha-1,3-mannosyl-glycoprotein 4-beta-N-acetylglucosaminyltransferase-like protein MGAT4D.